Reading from the N-terminus, the 336-residue chain is GTPase Obg (336 aa).

The Obg domain occupies 1 to 159 (MKFLDQAKIY…RWVWLRLKLI (159 aa)). One can recognise an OBG-type G domain in the interval 160–328 (ADIGLVGLPN…LLRLLQDRVT (169 aa)). GTP is bound by residues 166-173 (GLPNAGKS), 191-195 (FTTLH), 213-216 (DIPG), 280-283 (NKCD), and 309-311 (SGA). Positions 173 and 193 each coordinate Mg(2+).

Belongs to the TRAFAC class OBG-HflX-like GTPase superfamily. OBG GTPase family. In terms of assembly, monomer. Requires Mg(2+) as cofactor.

It is found in the cytoplasm. An essential GTPase which binds GTP, GDP and possibly (p)ppGpp with moderate affinity, with high nucleotide exchange rates and a fairly low GTP hydrolysis rate. Plays a role in control of the cell cycle, stress response, ribosome biogenesis and in those bacteria that undergo differentiation, in morphogenesis control. The protein is GTPase Obg of Gluconobacter oxydans (strain 621H) (Gluconobacter suboxydans).